The following is a 1091-amino-acid chain: Sodium/potassium exporting P-type ATPase 1 (1091 aa).

At 1 to 63 (MGEGTTKENN…LGDDTKIDYK (63 aa)) the chain is on the cytoplasmic side. The helical transmembrane segment at 64 to 84 (AMVLHQVCNAMIMVLLISMII) threads the bilayer. At 85–90 (SFAMHD) the chain is on the extracellular side. The helical transmembrane segment at 91–111 (WITGGVISFVIAVNVLIGLVQ) threads the bilayer. The Cytoplasmic segment spans residues 112 to 282 (EYKATKTMNS…TNVGTPLHRK (171 aa)). The chain crosses the membrane as a helical span at residues 283-303 (LSKLAVLLFWIAVLFAIIVMA). The Extracellular segment spans residues 304–312 (SQKFDVDKR). Residues 313–333 (VAIYAICVALSMIPSSLVVVL) form a helical membrane-spanning segment. Residues 334–815 (TITMSVGAAV…RRMTDNIQKF (482 aa)) lie on the Cytoplasmic side of the membrane. Asp-369 functions as the 4-aspartylphosphate intermediate in the catalytic mechanism. Mg(2+) contacts are provided by Asp-369 and Thr-371. The ATP site is built by Thr-371 and Glu-483. The disordered stretch occupies residues 499–525 (ALTGEKSTNQSNENDQSSLSQHNEKPG). Positions 503–519 (EKSTNQSNENDQSSLSQ) are enriched in polar residues. 7 residues coordinate ATP: Lys-561, Arg-606, Thr-673, Gly-674, Asp-675, Arg-732, and Lys-738. Mg(2+) is bound at residue Asp-757. Residue Asn-760 coordinates ATP. Residues 816 to 836 (VLQLLAENVAQALYLIIGLVF) traverse the membrane as a helical segment. The Extracellular portion of the chain corresponds to 837–848 (RDENGKSVFPLS). The helical transmembrane segment at 849–869 (PVEVLWIIVVTSCFPAMGLGL) threads the bilayer. At 870 to 885 (EKAAPDLMDRPPHDSE) the chain is on the cytoplasmic side. Residues 886–906 (VGIFTWEVIIDTFAYGIIMTG) traverse the membrane as a helical segment. Residues 907 to 943 (SCMASFTGSLYGINSGRLGHDCDGTYNSSCRDVYRSR) lie on the Extracellular side of the membrane. A helical transmembrane segment spans residues 944–964 (SAAFATMTWCALILAWEVVDM). Residues 965–991 (RRSFFRMHPDTDSPVKEFFRSIWGNQF) lie on the Cytoplasmic side of the membrane. Residues 992–1012 (LFWSIIFGFVSAFPVVYIPVI) traverse the membrane as a helical segment. Over 1013–1021 (NDKVFLHKP) the chain is Extracellular. A helical transmembrane segment spans residues 1022 to 1042 (IGAEWGLAIAFTIAFWIGAEL). The Cytoplasmic segment spans residues 1043 to 1091 (YKCGKRRYFKTQRAHNPENDLESNNKRDPFEAYSTSTTIHTEVNIGIKQ).

This sequence belongs to the cation transport ATPase (P-type) (TC 3.A.3) family. Type IID subfamily. Mg(2+) is required as a cofactor. Post-translationally, the active site is phosphorylated in presence of sodium or potassium and in conditions of higher pH. Not phosphorylated in presence of calcium ions.

Its subcellular location is the cell membrane. It carries out the reaction Na(+)(in) + ATP + H2O = Na(+)(out) + ADP + phosphate + H(+). It catalyses the reaction K(+)(in) + ATP + H2O = K(+)(out) + ADP + phosphate + H(+). Functionally, catalyzes the hydrolysis of ATP coupled with the export of sodium and potassium from the cell. May export potassium less efficiently. May transport other cations such as lithium. Sodium/potassium efflux ATPases are involved in salt tolerance and maintaining the membrane potential across the plasma membrane in high salinity (Na+) or alkaline (K+) environments. Is negatively modulated by SIS2/HAL3. The chain is Sodium/potassium exporting P-type ATPase 1 from Saccharomyces cerevisiae (strain ATCC 204508 / S288c) (Baker's yeast).